Here is a 364-residue protein sequence, read N- to C-terminus: Probable dual-specificity RNA methyltransferase RlmN (364 aa).

The Proton acceptor role is filled by Glu-107. Residues 113 to 346 form the Radical SAM core domain; that stretch reads HDYGNSVCVT…ATIRREQGSD (234 aa). Cysteines 120 and 351 form a disulfide. [4Fe-4S] cluster-binding residues include Cys-127, Cys-131, and Cys-134. Residues 177–178, Ser-209, 232–234, and Asn-308 each bind S-adenosyl-L-methionine; these read GE and SLH. The S-methylcysteine intermediate role is filled by Cys-351.

Belongs to the radical SAM superfamily. RlmN family. Requires [4Fe-4S] cluster as cofactor.

It localises to the cytoplasm. The catalysed reaction is adenosine(2503) in 23S rRNA + 2 reduced [2Fe-2S]-[ferredoxin] + 2 S-adenosyl-L-methionine = 2-methyladenosine(2503) in 23S rRNA + 5'-deoxyadenosine + L-methionine + 2 oxidized [2Fe-2S]-[ferredoxin] + S-adenosyl-L-homocysteine. It carries out the reaction adenosine(37) in tRNA + 2 reduced [2Fe-2S]-[ferredoxin] + 2 S-adenosyl-L-methionine = 2-methyladenosine(37) in tRNA + 5'-deoxyadenosine + L-methionine + 2 oxidized [2Fe-2S]-[ferredoxin] + S-adenosyl-L-homocysteine. Its function is as follows. Specifically methylates position 2 of adenine 2503 in 23S rRNA and position 2 of adenine 37 in tRNAs. Confers resistance to some classes of antibiotics. The sequence is that of Probable dual-specificity RNA methyltransferase RlmN from Staphylococcus aureus (strain MW2).